Consider the following 406-residue polypeptide: Phosphopentomutase (406 aa).

Residues D10, D305, H310, D346, H347, and H358 each contribute to the Mn(2+) site.

This sequence belongs to the phosphopentomutase family. Requires Mn(2+) as cofactor.

It is found in the cytoplasm. It catalyses the reaction 2-deoxy-alpha-D-ribose 1-phosphate = 2-deoxy-D-ribose 5-phosphate. It carries out the reaction alpha-D-ribose 1-phosphate = D-ribose 5-phosphate. Its pathway is carbohydrate degradation; 2-deoxy-D-ribose 1-phosphate degradation; D-glyceraldehyde 3-phosphate and acetaldehyde from 2-deoxy-alpha-D-ribose 1-phosphate: step 1/2. In terms of biological role, isomerase that catalyzes the conversion of deoxy-ribose 1-phosphate (dRib-1-P) and ribose 1-phosphate (Rib-1-P) to deoxy-ribose 5-phosphate (dRib-5-P) and ribose 5-phosphate (Rib-5-P), respectively. This is Phosphopentomutase from Aliivibrio salmonicida (strain LFI1238) (Vibrio salmonicida (strain LFI1238)).